Consider the following 575-residue polypeptide: Estrogen receptor beta (575 aa).

Residues 1 to 160 are modulating; the sequence is MSSSLSPTLQ…GAVVKRDMHF (160 aa). Residues 108–151 form a disordered region; that stretch reads DTKPHTSGRHSSFLSRPKLFGKRPEDGDGDEALDDDDPSSSSSG. Acidic residues predominate over residues 134 to 145; it reads GDGDEALDDDDP. 2 consecutive NR C4-type zinc fingers follow at residues 161 to 181 and 197 to 221; these read CVVC…CEGC and CPAT…LRKC. Residues 161–226 constitute a DNA-binding region (nuclear receptor); that stretch reads CVVCHDYASG…RLRKCYEMGM (66 aa). One can recognise an NR LBD domain in the interval 290–526; sequence SPEQLVYCIL…DLLLEMLDAN (237 aa). The segment covering 537–549 has biased composition (polar residues); it reads VCTDPVTPATSPN. The tract at residues 537–557 is disordered; sequence VCTDPVTPATSPNTPLPPQLH.

It belongs to the nuclear hormone receptor family. NR3 subfamily. In terms of assembly, binds DNA as a homodimer. Can form a heterodimer with ER-alpha. Ovary and testis.

Its subcellular location is the nucleus. Binds estrogens with an affinity similar to that of ER-alpha, and activates expression of reporter genes containing estrogen response elements (ERE) in an estrogen-dependent manner. The polypeptide is Estrogen receptor beta (esr2) (Ictalurus punctatus (Channel catfish)).